The following is a 324-amino-acid chain: Acetyl-coenzyme A carboxylase carboxyl transferase subunit beta (324 aa).

A compositionally biased stretch (low complexity) spans 1–16; it reads MTKNNNDLSNSSSNPP. The segment at 1–51 is disordered; it reads MTKNNNDLSNSSSNPPSNRPVAGKEAELEIQRETHAAQSGQSESWLSRPIP. Residues 22-35 show a composition bias toward basic and acidic residues; it reads AGKEAELEIQRETH. The segment covering 36 to 45 has biased composition (polar residues); the sequence is AAQSGQSESW. A CoA carboxyltransferase N-terminal domain is found at 68-324; the sequence is PSTECPQCHS…YRLLAKLTHV (257 aa). Zn(2+)-binding residues include Cys72, Cys75, Cys91, and Cys94. The C4-type zinc-finger motif lies at 72 to 94; the sequence is CPQCHSMITNTALIFNAYVCPHC.

Belongs to the AccD/PCCB family. As to quaternary structure, acetyl-CoA carboxylase is a heterohexamer composed of biotin carboxyl carrier protein (AccB), biotin carboxylase (AccC) and two subunits each of ACCase subunit alpha (AccA) and ACCase subunit beta (AccD). The cofactor is Zn(2+).

The protein resides in the cytoplasm. The catalysed reaction is N(6)-carboxybiotinyl-L-lysyl-[protein] + acetyl-CoA = N(6)-biotinyl-L-lysyl-[protein] + malonyl-CoA. Its pathway is lipid metabolism; malonyl-CoA biosynthesis; malonyl-CoA from acetyl-CoA: step 1/1. Functionally, component of the acetyl coenzyme A carboxylase (ACC) complex. Biotin carboxylase (BC) catalyzes the carboxylation of biotin on its carrier protein (BCCP) and then the CO(2) group is transferred by the transcarboxylase to acetyl-CoA to form malonyl-CoA. The sequence is that of Acetyl-coenzyme A carboxylase carboxyl transferase subunit beta from Psychrobacter sp. (strain PRwf-1).